A 105-amino-acid polypeptide reads, in one-letter code: Small ribosomal subunit protein eS10A (105 aa).

The protein belongs to the eukaryotic ribosomal protein eS10 family. In terms of assembly, component of the small ribosomal subunit (SSU). Mature yeast ribosomes consist of a small (40S) and a large (60S) subunit. The 40S small subunit contains 1 molecule of ribosomal RNA (18S rRNA) and 33 different proteins (encoded by 57 genes). The large 60S subunit contains 3 rRNA molecules (25S, 5.8S and 5S rRNA) and 46 different proteins (encoded by 81 genes). eS10 interacts with GCN1 (via middle region); this interaction is direct and promotes GCN2 kinase activity. In terms of processing, the N-terminus is not modified.

The protein resides in the cytoplasm. Functionally, component of the ribosome, a large ribonucleoprotein complex responsible for the synthesis of proteins in the cell. The small ribosomal subunit (SSU) binds messenger RNAs (mRNAs) and translates the encoded message by selecting cognate aminoacyl-transfer RNA (tRNA) molecules. The large subunit (LSU) contains the ribosomal catalytic site termed the peptidyl transferase center (PTC), which catalyzes the formation of peptide bonds, thereby polymerizing the amino acids delivered by tRNAs into a polypeptide chain. The nascent polypeptides leave the ribosome through a tunnel in the LSU and interact with protein factors that function in enzymatic processing, targeting, and the membrane insertion of nascent chains at the exit of the ribosomal tunnel. eS10 plays a role as a positive regulator of the GCN2 kinase activity by stimulating GCN1-mediated GCN2 activation. This is Small ribosomal subunit protein eS10A from Saccharomyces cerevisiae (strain ATCC 204508 / S288c) (Baker's yeast).